The primary structure comprises 57 residues: Myrmicitoxin(1)-Pm7a (57 aa).

The N-terminal stretch at 1-23 (MMKIIYAFLLIAVVAFMGSGIMA) is a signal peptide. Residues 24 to 31 (EPLAEAIA) constitute a propeptide that is removed on maturation.

It belongs to the formicidae venom clade 4 family. In terms of tissue distribution, expressed by the venom gland.

It localises to the secreted. In terms of biological role, probable neurotoxin. The polypeptide is Myrmicitoxin(1)-Pm7a (Pogonomyrmex maricopa (Maricopa harvester ant)).